The chain runs to 200 residues: Recombination protein RecR (200 aa).

The C4-type zinc-finger motif lies at 57 to 72 (CRQCRTLTEEELCPQC). In terms of domain architecture, Toprim spans 80-175 (TLLCVVEGPM…ITSRIAHGVP (96 aa)).

It belongs to the RecR family.

May play a role in DNA repair. It seems to be involved in an RecBC-independent recombinational process of DNA repair. It may act with RecF and RecO. This chain is Recombination protein RecR, found in Pseudomonas fluorescens (strain SBW25).